The primary structure comprises 572 residues: RNA polymerase sigma factor sigB (572 aa).

The transit peptide at 1 to 39 (MSSCLLPQFKCPPDSFSIHFRTSFCAPKHNKGSVFFQPQ) directs the protein to the chloroplast. Positions 215-249 (TRQTERKARRAKGLEKTASGIPSVKTGSSPKKKRL) are disordered. Residues 360-373 (DLVQEGCRGLVRGA) carry the Polymerase core binding motif. A DNA-binding region (H-T-H motif) is located at residues 530 to 549 (LQEIGEMMGVSRERVRQIES).

This sequence belongs to the sigma-70 factor family. Highly expressed in cotyledons, to a lesser extent in leaves, sepals and siliques, and barely expressed in roots. Present in seedlings.

It localises to the plastid. It is found in the chloroplast. In terms of biological role, required for the transition of plastids into chloroplasts by coordinating nuclear and chloroplastic genomes under light conditions. Sigma factors are initiation factors that promote the attachment of plastid-encoded RNA polymerase (PEP) to specific initiation sites and are then released. Promotes the biosynthesis of plastid-encoded tRNAs (e.g. trnE-UUC and trnV-UAC). The sequence is that of RNA polymerase sigma factor sigB (SIGB) from Arabidopsis thaliana (Mouse-ear cress).